The following is a 393-amino-acid chain: 1-deoxy-D-xylulose 5-phosphate reductoisomerase (393 aa).

The NADPH site is built by T13, G14, S15, I16, and N128. K129 is a 1-deoxy-D-xylulose 5-phosphate binding site. E130 lines the NADPH pocket. D154 contributes to the Mn(2+) binding site. 1-deoxy-D-xylulose 5-phosphate contacts are provided by S155, E156, S178, and H201. E156 lines the Mn(2+) pocket. G207 is a binding site for NADPH. 1-deoxy-D-xylulose 5-phosphate-binding residues include S214, N219, K220, and E223. E223 lines the Mn(2+) pocket.

Belongs to the DXR family. The cofactor is Mg(2+). Mn(2+) serves as cofactor.

It catalyses the reaction 2-C-methyl-D-erythritol 4-phosphate + NADP(+) = 1-deoxy-D-xylulose 5-phosphate + NADPH + H(+). Its pathway is isoprenoid biosynthesis; isopentenyl diphosphate biosynthesis via DXP pathway; isopentenyl diphosphate from 1-deoxy-D-xylulose 5-phosphate: step 1/6. In terms of biological role, catalyzes the NADPH-dependent rearrangement and reduction of 1-deoxy-D-xylulose-5-phosphate (DXP) to 2-C-methyl-D-erythritol 4-phosphate (MEP). In Acidithiobacillus ferrooxidans (strain ATCC 23270 / DSM 14882 / CIP 104768 / NCIMB 8455) (Ferrobacillus ferrooxidans (strain ATCC 23270)), this protein is 1-deoxy-D-xylulose 5-phosphate reductoisomerase.